The sequence spans 324 residues: Carbonic anhydrase, chloroplastic (324 aa).

It belongs to the beta-class carbonic anhydrase family. As to quaternary structure, homohexamer.

The protein resides in the plastid. The protein localises to the chloroplast stroma. The catalysed reaction is hydrogencarbonate + H(+) = CO2 + H2O. In terms of biological role, reversible hydration of carbon dioxide. The protein is Carbonic anhydrase, chloroplastic of Hordeum vulgare (Barley).